Reading from the N-terminus, the 338-residue chain is Lipoate-protein ligase A (338 aa).

In terms of domain architecture, BPL/LPL catalytic spans 29-216; sequence PATQRVLFLW…AFFAHYGERV (188 aa). ATP contacts are provided by residues R71, 76–79, and K134; that span reads GAVF. K134 is a binding site for (R)-lipoate.

It belongs to the LplA family. As to quaternary structure, monomer.

The protein localises to the cytoplasm. The enzyme catalyses L-lysyl-[lipoyl-carrier protein] + (R)-lipoate + ATP = N(6)-[(R)-lipoyl]-L-lysyl-[lipoyl-carrier protein] + AMP + diphosphate + H(+). The protein operates within protein modification; protein lipoylation via exogenous pathway; protein N(6)-(lipoyl)lysine from lipoate: step 1/2. It functions in the pathway protein modification; protein lipoylation via exogenous pathway; protein N(6)-(lipoyl)lysine from lipoate: step 2/2. Catalyzes both the ATP-dependent activation of exogenously supplied lipoate to lipoyl-AMP and the transfer of the activated lipoyl onto the lipoyl domains of lipoate-dependent enzymes. This chain is Lipoate-protein ligase A, found in Salmonella dublin (strain CT_02021853).